We begin with the raw amino-acid sequence, 155 residues long: MYQKLQAPTLSSKEAAIQLLSRRDHGQYELYQKLALKGYEEADIEAAINFCLDHNYLDDLRYAKSQVRQHVYKGHGERRIRQELKQKRVAESIIDMAMAEEPQDWFELARMAAEKKFKGIKAKDQKEYAKQVRFLQYRGYSFDQISYALSFEDED.

It belongs to the RecX family.

The protein localises to the cytoplasm. Modulates RecA activity. The polypeptide is Regulatory protein RecX (Vibrio campbellii (strain ATCC BAA-1116)).